The following is a 286-amino-acid chain: NAD(P)H azoreductase (286 aa).

NADP(+) is bound by residues 6–11, Arg31, and 136–141; these read GGTGTI and GFFMQN.

Belongs to the NmrA-type oxidoreductase family. Azoreductase type 3 subfamily. Monomer.

Catalyzes the reductive cleavage of azo bond in aromatic azo compounds to the corresponding amines. Uses preferentially NADPH rather than NADH as an electron donor for its activity. The enzyme reductively cleaved Orange II and carboxy-Orange II, and can also reduce several sulfonated structural analogs, which carry a hydroxy group in the 2 position of the naphthol ring. This chain is NAD(P)H azoreductase (azoB), found in Xenophilus azovorans.